The sequence spans 382 residues: Carbamoyl phosphate synthase small chain (382 aa).

Residues 1–189 (MIKSALLVLE…GLPEAKKEDE (189 aa)) form a CPSase region. Residues serine 47, glycine 241, and glycine 243 each coordinate L-glutamine. One can recognise a Glutamine amidotransferase type-1 domain in the interval 193–380 (HVVAYDFGAK…IALIEQYRKT (188 aa)). The active-site Nucleophile is the cysteine 269. 5 residues coordinate L-glutamine: leucine 270, glutamine 273, asparagine 311, glycine 313, and phenylalanine 314. Active-site residues include histidine 353 and glutamate 355.

Belongs to the CarA family. Composed of two chains; the small (or glutamine) chain promotes the hydrolysis of glutamine to ammonia, which is used by the large (or ammonia) chain to synthesize carbamoyl phosphate. Tetramer of heterodimers (alpha,beta)4.

The enzyme catalyses hydrogencarbonate + L-glutamine + 2 ATP + H2O = carbamoyl phosphate + L-glutamate + 2 ADP + phosphate + 2 H(+). It carries out the reaction L-glutamine + H2O = L-glutamate + NH4(+). It functions in the pathway amino-acid biosynthesis; L-arginine biosynthesis; carbamoyl phosphate from bicarbonate: step 1/1. Its pathway is pyrimidine metabolism; UMP biosynthesis via de novo pathway; (S)-dihydroorotate from bicarbonate: step 1/3. Its function is as follows. Small subunit of the glutamine-dependent carbamoyl phosphate synthetase (CPSase). CPSase catalyzes the formation of carbamoyl phosphate from the ammonia moiety of glutamine, carbonate, and phosphate donated by ATP, constituting the first step of 2 biosynthetic pathways, one leading to arginine and/or urea and the other to pyrimidine nucleotides. The small subunit (glutamine amidotransferase) binds and cleaves glutamine to supply the large subunit with the substrate ammonia. This chain is Carbamoyl phosphate synthase small chain, found in Escherichia coli O6:H1 (strain CFT073 / ATCC 700928 / UPEC).